We begin with the raw amino-acid sequence, 358 residues long: Protein RecA (358 aa).

Residue 76 to 83 (GPESSGKT) participates in ATP binding.

This sequence belongs to the RecA family.

Its subcellular location is the cytoplasm. Can catalyze the hydrolysis of ATP in the presence of single-stranded DNA, the ATP-dependent uptake of single-stranded DNA by duplex DNA, and the ATP-dependent hybridization of homologous single-stranded DNAs. It interacts with LexA causing its activation and leading to its autocatalytic cleavage. The chain is Protein RecA from Rhodospirillum centenum (strain ATCC 51521 / SW).